Reading from the N-terminus, the 100-residue chain is Ribosomal processing cysteine protease Prp (100 aa).

The Proton donor role is filled by His-16. Cys-28 functions as the Nucleophile in the catalytic mechanism.

This sequence belongs to the Prp family. Homodimer.

In terms of biological role, an essential cysteine protease that cleaves the N-terminus from ribosomal protein bL27. In Mycoplasma pneumoniae (strain ATCC 29342 / M129 / Subtype 1) (Mycoplasmoides pneumoniae), this protein is Ribosomal processing cysteine protease Prp.